The chain runs to 619 residues: Transcription factor 7-like 2 (619 aa).

Residues 1-11 show a composition bias toward gly residues; it reads MPQLNGGGGDD. The CTNNB1-binding stretch occupies residues 1–53; the sequence is MPQLNGGGGDDLGANDELISFKDEGEQEEKSSENSSAERDLADVKSSLVNESE. A disordered region spans residues 1-96; that stretch reads MPQLNGGGGD…AKRQDGGLFK (96 aa). A compositionally biased stretch (basic and acidic residues) spans 19–43; that stretch reads ISFKDEGEQEEKSSENSSAERDLAD. Residue Lys22 forms a Glycyl lysine isopeptide (Lys-Gly) (interchain with G-Cter in SUMO2) linkage. Positions 47 to 57 are enriched in polar residues; it reads SLVNESETNQN. Positions 63-91 are enriched in basic and acidic residues; that stretch reads EAERRPPPRSESFRDKSRESLEEAAKRQD. Phosphothreonine; by NLK occurs at positions 201 and 212. A mediates interaction with MAD2L2 region spans residues 201-395; sequence TPLITYSNEH…RRWHALSREE (195 aa). The segment covering 318–328 has biased composition (polar residues); that stretch reads TVKQESSQSDV. Disordered regions lie at residues 318 to 350, 420 to 441, 496 to 547, and 574 to 619; these read TVKQ…KPHI, RDNY…TNEH, CLSP…AHLS, and DLPP…KSLE. Residue Lys320 forms a Glycyl lysine isopeptide (Lys-Gly) (interchain with G-Cter in SUMO) linkage. A compositionally biased stretch (basic and acidic residues) spans 335-346; that stretch reads KHQDSKKEEEKK. Positions 350–418 form a DNA-binding region, HMG box; that stretch reads IKKPLNAFML…LHMQLYPGWS (69 aa). The Nuclear localization signal motif lies at 425–430; it reads KKKKRK. A promoter-specific activation domain region spans residues 459 to 505; it reads SAPKKCRARFGLDQQNNWCGPCRRKKKCVRYIQGEGSCLSPPSSDGS. Residues 496–508 are compositionally biased toward low complexity; sequence CLSPPSSDGSLLD. A Glycyl lysine isopeptide (Lys-Gly) (interchain with G-Cter in SUMO2) cross-link involves residue Lys539. Residues 574–603 are compositionally biased toward low complexity; that stretch reads DLPPAALQPAAPSSSIAQPSTSSLHSHSSL. Residues 604–619 are compositionally biased toward polar residues; the sequence is AGTQPQPLSLVTKSLE.

Belongs to the TCF/LEF family. Interacts with TGFB1I1. Interacts with CTNNB1 (via the armadillo repeat); forms stable transcription complex. Interacts with EP300. Interacts with NLK. Interacts with CCDC85B (probably through the HMG box); prevents interaction with CTNNB1. Interacts with TNIK. Interacts with MAD2L2; prevents TCF7L2/TCF4 binding to promZIPK/DAPK3oters, negatively modulating its transcriptional activity. Interacts with ZIPK/DAPK3. Interacts with XIAP/BIRC4 and TLE3. Interacts with DDIT3/CHOP. The CTNNB1 and TCF7L2/TCF4 complex interacts with PML (isoform PML-4). Identified in a complex with CTNNB1 and FERMT2. Interacts with SPIN1. Interacts with C11orf84/SPINDOC in a SPIN1-dependent manner. Interacts with DAZAP2; the interaction results in localization of DAZAP2 to the nucleus. Post-translationally, in vitro, phosphorylated by TNIK. Phosphorylated at Thr-201 and/or Thr-212 by NLK. Phosphorylation by NLK at these sites inhibits DNA-binding by TCF7L2/TCF4, thereby preventing transcriptional activation of target genes of the canonical Wnt/beta-catenin signaling pathway. In terms of processing, polysumoylated. Sumoylation is enhanced by PIAS family members and desumoylation is enhanced by SENP2. Sumoylation/desumoylation regulates TCF7L2/TCF4 transcription activity in the Wnt/beta-catenin signaling pathway without altering interaction with CTNNB1 nor binding to DNA. As to expression, detected in epithelium from small intestine, with the highest expression at the top of the crypts and a gradient of expression from crypt to villus. Detected in colon epithelium and colon cancer, and in epithelium from mammary gland and carcinomas derived therefrom.

The protein localises to the nucleus. Its subcellular location is the PML body. Its function is as follows. Participates in the Wnt signaling pathway and modulates MYC expression by binding to its promoter in a sequence-specific manner. Acts as a repressor in the absence of CTNNB1, and as activator in its presence. Activates transcription from promoters with several copies of the Tcf motif 5'-CCTTTGATC-3' in the presence of CTNNB1. TLE1, TLE2, TLE3 and TLE4 repress transactivation mediated by TCF7L2/TCF4 and CTNNB1. Expression of dominant-negative mutants results in cell-cycle arrest in G1. Necessary for the maintenance of the epithelial stem-cell compartment of the small intestine. The sequence is that of Transcription factor 7-like 2 (TCF7L2) from Homo sapiens (Human).